Reading from the N-terminus, the 427-residue chain is Enolase (427 aa).

Gln163 is a binding site for (2R)-2-phosphoglycerate. Glu205 (proton donor) is an active-site residue. Mg(2+) is bound by residues Asp242, Glu283, and Asp310. (2R)-2-phosphoglycerate is bound by residues Lys335, Arg364, Ser365, and Lys386. Catalysis depends on Lys335, which acts as the Proton acceptor.

Belongs to the enolase family. Mg(2+) serves as cofactor.

Its subcellular location is the cytoplasm. The protein localises to the secreted. It localises to the cell surface. It carries out the reaction (2R)-2-phosphoglycerate = phosphoenolpyruvate + H2O. It participates in carbohydrate degradation; glycolysis; pyruvate from D-glyceraldehyde 3-phosphate: step 4/5. Functionally, catalyzes the reversible conversion of 2-phosphoglycerate (2-PG) into phosphoenolpyruvate (PEP). It is essential for the degradation of carbohydrates via glycolysis. The polypeptide is Enolase (Salinispora tropica (strain ATCC BAA-916 / DSM 44818 / JCM 13857 / NBRC 105044 / CNB-440)).